We begin with the raw amino-acid sequence, 138 residues long: Prefoldin subunit alpha (138 aa).

This sequence belongs to the prefoldin subunit alpha family. In terms of assembly, heterohexamer of two alpha and four beta subunits.

It localises to the cytoplasm. Molecular chaperone capable of stabilizing a range of proteins. Seems to fulfill an ATP-independent, HSP70-like function in archaeal de novo protein folding. In Methanosphaera stadtmanae (strain ATCC 43021 / DSM 3091 / JCM 11832 / MCB-3), this protein is Prefoldin subunit alpha.